The sequence spans 326 residues: Biotin synthase (326 aa).

The Radical SAM core domain occupies 41–271 (YHVQLASLLS…EARVRLSAGR (231 aa)). Residues Cys56, Cys60, and Cys63 each coordinate [4Fe-4S] cluster. [2Fe-2S] cluster is bound by residues Cys102, Cys134, Cys194, and Arg266.

It belongs to the radical SAM superfamily. Biotin synthase family. As to quaternary structure, homodimer. Requires [4Fe-4S] cluster as cofactor. It depends on [2Fe-2S] cluster as a cofactor.

The enzyme catalyses (4R,5S)-dethiobiotin + (sulfur carrier)-SH + 2 reduced [2Fe-2S]-[ferredoxin] + 2 S-adenosyl-L-methionine = (sulfur carrier)-H + biotin + 2 5'-deoxyadenosine + 2 L-methionine + 2 oxidized [2Fe-2S]-[ferredoxin]. It participates in cofactor biosynthesis; biotin biosynthesis; biotin from 7,8-diaminononanoate: step 2/2. Catalyzes the conversion of dethiobiotin (DTB) to biotin by the insertion of a sulfur atom into dethiobiotin via a radical-based mechanism. The protein is Biotin synthase of Synechococcus sp. (strain RCC307).